Consider the following 209-residue polypeptide: V-type ATP synthase subunit D (209 aa).

Belongs to the V-ATPase D subunit family.

In terms of biological role, produces ATP from ADP in the presence of a proton gradient across the membrane. This Anaeromyxobacter dehalogenans (strain 2CP-1 / ATCC BAA-258) protein is V-type ATP synthase subunit D.